The following is a 254-amino-acid chain: Dihydroorotate dehydrogenase B (NAD(+)), electron transfer subunit (254 aa).

Positions 1–99 (MLQTEMKVIQ…LGPLGKGFDI (99 aa)) constitute an FAD-binding FR-type domain. FAD-binding positions include 50–53 (RPIS), 67–69 (LYR), and 74–75 (GT). The [2Fe-2S] cluster site is built by cysteine 218, cysteine 223, cysteine 226, and cysteine 241.

The protein belongs to the PyrK family. Heterotetramer of 2 PyrK and 2 PyrD type B subunits. [2Fe-2S] cluster serves as cofactor. The cofactor is FAD.

The protein operates within pyrimidine metabolism; UMP biosynthesis via de novo pathway; orotate from (S)-dihydroorotate (NAD(+) route): step 1/1. Functionally, responsible for channeling the electrons from the oxidation of dihydroorotate from the FMN redox center in the PyrD type B subunit to the ultimate electron acceptor NAD(+). The protein is Dihydroorotate dehydrogenase B (NAD(+)), electron transfer subunit of Listeria monocytogenes serotype 4a (strain HCC23).